We begin with the raw amino-acid sequence, 469 residues long: Uridine kinase-like protein 4 (469 aa).

Residues 46 to 249 form a uridine kinase region; that stretch reads QRQPFVIGVA…IVQHICTKLG (204 aa). A uracil phosphoribosyltransferase region spans residues 259 to 469; it reads NLYVIHSTFQ…GDRYFGTDDD (211 aa). GTP-binding positions include Lys283, Arg292, and 326 to 329; that span reads CKRL. 5-phospho-alpha-D-ribose 1-diphosphate-binding residues include Arg336 and Arg361. Arg381 provides a ligand contact to GTP. 5-phospho-alpha-D-ribose 1-diphosphate is bound by residues Asp387, 392–395, and Glu458; that span reads TGNS. 457-459 contributes to the uracil binding site; the sequence is GEF.

The protein in the N-terminal section; belongs to the uridine kinase family. This sequence in the C-terminal section; belongs to the UPRTase family. Mg(2+) serves as cofactor.

It catalyses the reaction UMP + diphosphate = 5-phospho-alpha-D-ribose 1-diphosphate + uracil. The catalysed reaction is cytidine + ATP = CMP + ADP + H(+). The enzyme catalyses uridine + ATP = UMP + ADP + H(+). The protein operates within pyrimidine metabolism; UMP biosynthesis via salvage pathway; UMP from uracil: step 1/1. It functions in the pathway pyrimidine metabolism; CTP biosynthesis via salvage pathway; CTP from cytidine: step 1/3. It participates in pyrimidine metabolism; UMP biosynthesis via salvage pathway; UMP from uridine: step 1/1. With respect to regulation, allosterically activated by GTP. Functionally, involved in the pyrimidine salvage pathway. The uracil phosphoribosyltransferase (UPRT) activity, that catalyzes the conversion of uracil and 5-phospho-alpha-D-ribose 1-diphosphate (PRPP) to UMP and diphosphate, is unsure. This chain is Uridine kinase-like protein 4 (UKL4), found in Arabidopsis thaliana (Mouse-ear cress).